The following is a 222-amino-acid chain: MESVLNNEKAIVVFSGGQDSTTCLFYAKKHFKEVELVTFNYGQRHDTEIEVAKQIAQDQGMKHHVLDMSLLSQLTPNALTQHDMEITNNEDGIPNTFVPARNLLFLSFAGALAYQIGAKHIITGVCETDFSGYPDCRDSFIKSMNVTLSLAMDKDCVIHTPLMWLNKAETWKLSDELEVLDYIRTKTLTCYNGIIGDGCGECPACHLRQRGLNQYLESKGAL.

14-24 serves as a coordination point for ATP; it reads FSGGQDSTTCL. The Zn(2+) site is built by Cys190, Cys199, Cys202, and Cys205.

This sequence belongs to the QueC family. Homodimer. Zn(2+) serves as cofactor.

It carries out the reaction 7-carboxy-7-deazaguanine + NH4(+) + ATP = 7-cyano-7-deazaguanine + ADP + phosphate + H2O + H(+). The protein operates within purine metabolism; 7-cyano-7-deazaguanine biosynthesis. Functionally, catalyzes the ATP-dependent conversion of 7-carboxy-7-deazaguanine (CDG) to 7-cyano-7-deazaguanine (preQ(0)). The protein is 7-cyano-7-deazaguanine synthase of Staphylococcus aureus (strain bovine RF122 / ET3-1).